A 504-amino-acid chain; its full sequence is Cytochrome P450 6B6 (504 aa).

Heme is bound at residue cysteine 445.

This sequence belongs to the cytochrome P450 family. It depends on heme as a cofactor.

It is found in the endoplasmic reticulum membrane. It localises to the microsome membrane. It carries out the reaction an organic molecule + reduced [NADPH--hemoprotein reductase] + O2 = an alcohol + oxidized [NADPH--hemoprotein reductase] + H2O + H(+). The protein is Cytochrome P450 6B6 (CYP6B6) of Helicoverpa armigera (Cotton bollworm).